We begin with the raw amino-acid sequence, 264 residues long: Thymidylate synthase (264 aa).

Arg-21 is a dUMP binding site. His-51 is a binding site for (6R)-5,10-methylene-5,6,7,8-tetrahydrofolate. 126-127 is a binding site for dUMP; the sequence is RR. The active-site Nucleophile is the Cys-146. DUMP contacts are provided by residues 166–169, Asn-177, and 207–209; these read RSCD and HLY. Asp-169 provides a ligand contact to (6R)-5,10-methylene-5,6,7,8-tetrahydrofolate. Ala-263 lines the (6R)-5,10-methylene-5,6,7,8-tetrahydrofolate pocket.

It belongs to the thymidylate synthase family. Bacterial-type ThyA subfamily. As to quaternary structure, homodimer.

Its subcellular location is the cytoplasm. It carries out the reaction dUMP + (6R)-5,10-methylene-5,6,7,8-tetrahydrofolate = 7,8-dihydrofolate + dTMP. Its pathway is pyrimidine metabolism; dTTP biosynthesis. In terms of biological role, catalyzes the reductive methylation of 2'-deoxyuridine-5'-monophosphate (dUMP) to 2'-deoxythymidine-5'-monophosphate (dTMP) while utilizing 5,10-methylenetetrahydrofolate (mTHF) as the methyl donor and reductant in the reaction, yielding dihydrofolate (DHF) as a by-product. This enzymatic reaction provides an intracellular de novo source of dTMP, an essential precursor for DNA biosynthesis. This is Thymidylate synthase from Aeromonas hydrophila subsp. hydrophila (strain ATCC 7966 / DSM 30187 / BCRC 13018 / CCUG 14551 / JCM 1027 / KCTC 2358 / NCIMB 9240 / NCTC 8049).